The primary structure comprises 568 residues: Periplasmic trehalase (568 aa).

Positions 1–39 (MPHVVARSGDVMSSAAPPSCTSLLGLSLSMFVAPCTLTA) are cleaved as a signal peptide. Residues Arg-169, 176–177 (WD), Asn-213, 222–224 (RSQ), 294–296 (RPE), and Gly-327 each bind substrate. Active-site proton donor/acceptor residues include Asp-329 and Glu-511. Substrate is bound at residue Glu-526.

Belongs to the glycosyl hydrolase 37 family.

The protein resides in the periplasm. The enzyme catalyses alpha,alpha-trehalose + H2O = alpha-D-glucose + beta-D-glucose. Provides the cells with the ability to utilize trehalose at high osmolarity by splitting it into glucose molecules that can subsequently be taken up by the phosphotransferase-mediated uptake system. In Xanthomonas oryzae pv. oryzae (strain MAFF 311018), this protein is Periplasmic trehalase.